The primary structure comprises 165 residues: MSHPALTQLRALRYCKEIPALEPQLLDWLLLEDSMTKRFEQQGKTVSVTMIREGFVEQNEIPEELPLLPKESRYWLREILLCADGEPWLAGRTVVPVSTLSGPELALQKLGKTPLGRYLFTSSTLTRDFIEIGRDAGLWGRRSRLRLSGKPLLLTELFLPASPLY.

Substrate-binding residues include Met35, Arg77, Leu115, and Glu156.

The protein belongs to the UbiC family. In terms of assembly, monomer.

Its subcellular location is the cytoplasm. It catalyses the reaction chorismate = 4-hydroxybenzoate + pyruvate. It functions in the pathway cofactor biosynthesis; ubiquinone biosynthesis. Removes the pyruvyl group from chorismate, with concomitant aromatization of the ring, to provide 4-hydroxybenzoate (4HB) for the ubiquinone pathway. This Escherichia coli O157:H7 protein is Chorismate pyruvate-lyase.